The chain runs to 453 residues: Aldehyde dehydrogenase, dimeric NADP-preferring (453 aa).

The residue at position 2 (Ser-2) is an N-acetylserine. Lys-178 bears the N6-acetyllysine mark. 188-193 (GSTAVG) is a binding site for NAD(+). Position 194 is an N6-acetyllysine (Lys-194). Active-site residues include Glu-210 and Cys-244.

The protein belongs to the aldehyde dehydrogenase family. As to quaternary structure, homodimer. As to expression, constitutively expressed in cornea, stomach, skin, bladder and lungs. Lowest expression levels in lungs and bladder.

It localises to the cytoplasm. It carries out the reaction an aldehyde + NAD(+) + H2O = a carboxylate + NADH + 2 H(+). It catalyses the reaction octanal + NAD(+) + H2O = octanoate + NADH + 2 H(+). In terms of biological role, ALDHs play a major role in the detoxification of alcohol-derived acetaldehyde. They are involved in the metabolism of corticosteroids, biogenic amines, neurotransmitters, and lipid peroxidation. Oxidizes medium and long chain aldehydes into non-toxic fatty acids. Preferentially oxidizes aromatic aldehyde substrates. Comprises about 50 percent of corneal epithelial soluble proteins. May play a role in preventing corneal damage caused by ultraviolet light. The protein is Aldehyde dehydrogenase, dimeric NADP-preferring (Aldh3a1) of Mus musculus (Mouse).